We begin with the raw amino-acid sequence, 434 residues long: Oxysterol-binding protein homolog 5 (434 aa).

An OSBP-related domain (ORD) region spans residues 18-371 (SSFNGDLSSL…KQVDYMNENT (354 aa)). 24–29 (LSSLSA) serves as a coordination point for a 1,2-diacyl-sn-glycero-3-phospho-(1D-myo-inositol 4-phosphate). Glutamine 96 contacts 20-hydroxycholesterol. Residue glutamine 96 participates in 25-hydroxycholesterol binding. 7beta-hydroxycholesterol-binding residues include glutamine 96 and arginine 100. Position 96 (glutamine 96) interacts with cholesterol. An ergosterol-binding site is contributed by glutamine 96. Residues 109 to 112 (KPLN), 143 to 144 (HH), lysine 335, glutamate 339, and arginine 343 each bind a 1,2-diacyl-sn-glycero-3-phospho-(1D-myo-inositol 4-phosphate). A Phosphoserine modification is found at serine 389.

Belongs to the OSBP family.

It is found in the vacuole membrane. The protein localises to the bud neck. In terms of biological role, lipid transport protein (LTP) involved in non-vesicular transfer of lipids between membranes. Functions in phosphoinositide-coupled directional transport of various lipids by carrying the lipid molecule in a hydrophobic pocket and transferring it between membranes through the cytosol. Involved in maintenance of intracellular sterol distribution and homeostasis. Plays a role in ergosterol synthesis. Binds and transports sterol. May be involved in ergosterol transport from the plasma membrane (PM) to the ER. The protein is Oxysterol-binding protein homolog 5 of Saccharomyces cerevisiae (strain ATCC 204508 / S288c) (Baker's yeast).